The chain runs to 544 residues: Chaperonin GroEL 2 (544 aa).

ATP-binding positions include 29-32 (TLGP), 86-90 (DGTTT), glycine 413, 479-481 (NAA), and aspartate 495.

Belongs to the chaperonin (HSP60) family. As to quaternary structure, forms a cylinder of 14 subunits composed of two heptameric rings stacked back-to-back. Interacts with the co-chaperonin GroES.

It is found in the cytoplasm. It catalyses the reaction ATP + H2O + a folded polypeptide = ADP + phosphate + an unfolded polypeptide.. In terms of biological role, together with its co-chaperonin GroES, plays an essential role in assisting protein folding. The GroEL-GroES system forms a nano-cage that allows encapsulation of the non-native substrate proteins and provides a physical environment optimized to promote and accelerate protein folding. The sequence is that of Chaperonin GroEL 2 from Trichodesmium erythraeum (strain IMS101).